A 983-amino-acid chain; its full sequence is Nuclear factor NF-kappa-B p105 subunit (983 aa).

Residues 47-372 (PYLQIIEQPK…EVQRKRQKLM (326 aa)) enclose the RHD domain. An S-nitrosocysteine modification is found at C66. S342 carries the post-translational modification Phosphoserine; by PKA. The short motif at 365-370 (QRKRQK) is the Nuclear localization signal element. The interval 377-397 (DGYGGGSGAGGGGMFGGGGGG) is GRR. The tract at residues 423–454 (KSNAGMKHELSNSTVKKDEESSDKQSDKWDTK) is disordered. Basic and acidic residues predominate over residues 428 to 454 (MKHELSNSTVKKDEESSDKQSDKWDTK). 7 ANK repeats span residues 540–569 (NGDN…DMNY), 579–608 (LYQT…NVNL), 612–641 (HGNS…ASSM), 648–677 (EGLS…DVNA), 682–712 (SGRT…DVDS), 716–745 (DGTT…DPHV), and 769–799 (PGTT…AVSE). A Death domain is found at 804–891 (QGPLRELNES…EAIEVIQKAL (88 aa)). At S938 the chain carries Phosphoserine.

As to quaternary structure, active NF-kappa-B is a heterodimer of an about 50 kDa DNA-binding subunit and the weak DNA-binding subunit p65. Two heterodimers might form a labile tetramer. Post-translationally, generation of the NF-kappa-B p50 (Nuclear factor NF-kappa-B p50 subunit) transcription factor takes place both cotranslationally and post-translationally via non-mutually exclusive mechanisms. A cotranslational processing allows the production of both p50 and p105 (Nuclear factor NF-kappa-B p105 subunit) from a single NFKB1 mRNA. While translation occurs, the particular unfolded structure after the GRR repeat region acts as a substrate for the proteasome, promoting degradation of the C-terminus. The GRR acts as a proteasomal 'stop signal', protecting the region upstream of the GRR from degradation and promoting generation of p50. It is unclear if limited proteasome degradation during cotranslational processing depends on ubiquitination. NF-kappa-B p50 is also generated post-translationally following ubiquitination by the KPC complex, leading to limited processing by the proteasome downstream of the GRR region, thereby generating p50. In terms of processing, phosphorylation at the C-terminus by IKBKB/IKKB acts as a signal for ubiquitination and promotes either complete degradation or processing to generate the NF-kappa-B p50 (Nuclear factor NF-kappa-B p50 subunit). Phosphorylation at Ser-938 are required for BTRC/BTRCP-mediated ubiquitination and proteolysis. Phosphorylation at Ser-938 is also required for ubiquitination by the KPC complex and limited processing to generate NF-kappa-B p50 (Nuclear factor NF-kappa-B p50 subunit). Polyubiquitinated at multiple Lys residues in the C-terminus. Polyubiquitinated by the SCF(FBXW11) and SCF(BTRC) complexes following phosphorylation at Ser-938, leading to its complete degradation. In contrast, polyubiquitination by the KPC complex following phosphorylation at Ser-938 leads to limited proteosomal processing and generation of the active NF-kappa-B p50 (Nuclear factor NF-kappa-B p50 subunit). Post-translationally, S-nitrosylation of Cys-66 affects DNA binding. In terms of processing, the covalent modification of cysteine by 15-deoxy-Delta12,14-prostaglandin-J2 is autocatalytic and reversible. It may occur as an alternative to other cysteine modifications, such as S-nitrosylation and S-palmitoylation.

Its subcellular location is the cytoplasm. The protein localises to the nucleus. Its function is as follows. P105 is the precursor of the active p50 subunit (Nuclear factor NF-kappa-B p50 subunit) of the nuclear factor NF-kappa-B. The precursor protein itself does not bind to DNA. Acts as a cytoplasmic retention of attached NF-kappa-B proteins by p105. In terms of biological role, constitutes the active form, which associates with RELA/p65 to form the NF-kappa-B p65-p50 complex to form a transcription factor. Together with RELA/p65, binds to the kappa-B consensus sequence 5'-GGRNNYYCC-3', located in the enhancer region of genes involved in immune response and acute phase reactions. This is Nuclear factor NF-kappa-B p105 subunit (NFKB1) from Gallus gallus (Chicken).